A 201-amino-acid chain; its full sequence is tRNA (guanine-N(7)-)-methyltransferase (201 aa).

4 residues coordinate S-adenosyl-L-methionine: glutamate 33, glutamate 58, aspartate 85, and aspartate 106. Aspartate 106 is a catalytic residue. Substrate is bound by residues lysine 110, aspartate 142, and 180–183 (TTYE).

It belongs to the class I-like SAM-binding methyltransferase superfamily. TrmB family.

It catalyses the reaction guanosine(46) in tRNA + S-adenosyl-L-methionine = N(7)-methylguanosine(46) in tRNA + S-adenosyl-L-homocysteine. It functions in the pathway tRNA modification; N(7)-methylguanine-tRNA biosynthesis. In terms of biological role, catalyzes the formation of N(7)-methylguanine at position 46 (m7G46) in tRNA. The chain is tRNA (guanine-N(7)-)-methyltransferase from Mesomycoplasma hyopneumoniae (strain 232) (Mycoplasma hyopneumoniae).